The primary structure comprises 293 residues: Probable 2-(5''-triphosphoribosyl)-3'-dephosphocoenzyme-A synthase (293 aa).

It belongs to the CitG/MdcB family.

It carries out the reaction 3'-dephospho-CoA + ATP = 2'-(5''-triphospho-alpha-D-ribosyl)-3'-dephospho-CoA + adenine. Involved in the formation of 2-(5''-phosphoribosyl)-3'-dephosphocoenzyme-A, the prosthetic group of the acyl-carrier protein of the malonate decarboxylase. This chain is Probable 2-(5''-triphosphoribosyl)-3'-dephosphocoenzyme-A synthase, found in Pseudomonas paraeruginosa (strain DSM 24068 / PA7) (Pseudomonas aeruginosa (strain PA7)).